The sequence spans 194 residues: Cysteine and glycine-rich protein 3 (194 aa).

Positions 1 to 5 (MPNWG) are interaction with TCAP. One can recognise an LIM zinc-binding 1 domain in the interval 10–61 (CGACEKTVYHAEEIQCNGRSFHKTCFHCMACRKALDSTTVAAHESEIYCKVC). Positions 64-69 (RRYGPK) match the Nuclear localization signal motif. The tract at residues 94–105 (QSPKPARAATTS) is interaction with CLF2. 3 positions are modified to phosphoserine: Ser95, Ser111, and Ser153. Residues 120–171 (CPRCGKSVYAAEKVMGGGKPWHKTCFRCAICGKSLESTNVTDKDGELYCKVC) form the LIM zinc-binding 2 domain.

As to quaternary structure, self-associates. Oligomeric in the cytoplasm and monomeric in the nucleus. Homooligomers preferentially form along the actin cytoskeleton. Interacts with TCAP. Interacts with LDHD, MYOD1, MYOG, ACTN2, NRAP, MYF6. Interacts (via N-terminus)D with GLRX3 (via C-terminus) and PPP3CA; GLRX3 and calcineurin compete for interaction with CSRP3. Interacts with CFL2; the stoichiometry influences F-actin depolymerization and possibly two molecules of CFL2 can interact with one molecule of CSRP3 resulting in the highest functional impact; the interaction is stronger with phosphorylated CFL2. Phosphorylated by PKC/PRKCA.

The protein resides in the nucleus. The protein localises to the cytoplasm. It localises to the cytoskeleton. Its subcellular location is the myofibril. It is found in the sarcomere. The protein resides in the z line. Functionally, positive regulator of myogenesis. Acts as a cofactor for myogenic bHLH transcription factors such as MYOD1, and probably MYOG and MYF6. Enhances the DNA-binding activity of the MYOD1:TCF3 isoform E47 complex and may promote formation of a functional MYOD1:TCF3 isoform E47:MEF2A complex involved in myogenesis. Plays a crucial and specific role in the organization of cytosolic structures in cardiomyocytes. Could play a role in mechanical stretch sensing. May be a scaffold protein that promotes the assembly of interacting proteins at Z-line structures. It is essential for calcineurin anchorage to the Z line. Required for stress-induced calcineurin-NFAT activation. The role in regulation of cytoskeleton dynamics by association with CFL2 is reported conflictingly. Proposed to contribute to the maintenance of muscle cell integrity through an actin-based mechanism. Can directly bind to actin filaments, cross-link actin filaments into bundles without polarity selectivity and protect them from dilution- and cofilin-mediated depolymerization; the function seems to involve its self-association. In vitro can inhibit PKC/PRKCA activity. Proposed to be involved in cardiac stress signaling by down-regulating excessive PKC/PRKCA signaling. The protein is Cysteine and glycine-rich protein 3 (Csrp3) of Mus musculus (Mouse).